A 343-amino-acid chain; its full sequence is ABC transporter riboflavin-binding protein RfuA (343 aa).

Positions 1–19 are cleaved as a signal peptide; that stretch reads MNGAVCVLSALIAVFTCFS. Cys20 is lipidated: N-palmitoyl cysteine. Cys20 carries S-diacylglycerol cysteine lipidation. Riboflavin contacts are provided by residues 43 to 46, Asp124, Gln140, Tyr176, Trp208, and Asp255; that span reads SPVY.

This sequence belongs to the BMP lipoprotein family. Monomer in solution. The complex is probably composed of two ATP-binding proteins (RfuB), two transmembrane proteins (RfuC and RfuD) and a solute-binding protein (RfuA).

The protein resides in the cell inner membrane. Functionally, probably part of the ABC transporter complex RfuABCD involved in riboflavin import. Binds riboflavin. This Treponema pallidum (strain Nichols) protein is ABC transporter riboflavin-binding protein RfuA.